We begin with the raw amino-acid sequence, 137 residues long: MGLLSEFKAFAVKGNVVDMAVGIIIGAAFGKIVSSFVGDVIMPPIGLLIGGVDFSDLAITLKAAEGDVPAVVLAYGKFIQTVLDFVIVAFAIFMGVKAINRLKREEAVAPSEPPVPSAEETLLTEIRDLLKAQQNKS.

2 consecutive transmembrane segments (helical) span residues Ala-9–Phe-29 and Ile-79–Ile-99.

Belongs to the MscL family. Homopentamer.

Its subcellular location is the cell inner membrane. Its function is as follows. Channel that opens in response to stretch forces in the membrane lipid bilayer. May participate in the regulation of osmotic pressure changes within the cell. This Pseudomonas aeruginosa (strain ATCC 15692 / DSM 22644 / CIP 104116 / JCM 14847 / LMG 12228 / 1C / PRS 101 / PAO1) protein is Large-conductance mechanosensitive channel.